Reading from the N-terminus, the 246-residue chain is Probable hydroxyethylthiazole kinase (246 aa).

Methionine 50 is a substrate binding site. 2 residues coordinate ATP: arginine 125 and threonine 145. Substrate is bound at residue glycine 172.

Belongs to the Thz kinase family. The cofactor is Mg(2+).

It carries out the reaction 5-(2-hydroxyethyl)-4-methylthiazole + ATP = 4-methyl-5-(2-phosphooxyethyl)-thiazole + ADP + H(+). Its pathway is cofactor biosynthesis; thiamine diphosphate biosynthesis; 4-methyl-5-(2-phosphoethyl)-thiazole from 5-(2-hydroxyethyl)-4-methylthiazole: step 1/1. In terms of biological role, catalyzes the phosphorylation of the hydroxyl group of 4-methyl-5-beta-hydroxyethylthiazole (THZ). The protein is Probable hydroxyethylthiazole kinase (thiM) of Agrobacterium fabrum (strain C58 / ATCC 33970) (Agrobacterium tumefaciens (strain C58)).